The chain runs to 333 residues: Nucleoid-associated protein PSPTO_1265 (333 aa).

This sequence belongs to the YejK family.

The protein localises to the cytoplasm. The protein resides in the nucleoid. This chain is Nucleoid-associated protein PSPTO_1265, found in Pseudomonas syringae pv. tomato (strain ATCC BAA-871 / DC3000).